We begin with the raw amino-acid sequence, 479 residues long: Chromosomal replication initiator protein DnaA (479 aa).

Positions 1 to 71 (MNLTQIWKAT…RNALARVVGY (71 aa)) are domain I, interacts with DnaA modulators. The tract at residues 71-138 (YPVQVQVLIA…LDLASAMRSG (68 aa)) is domain II. A compositionally biased stretch (polar residues) spans 86–99 (TEPSPSLTLSNGSR). The disordered stretch occupies residues 86–106 (TEPSPSLTLSNGSRLMSDPEP). The domain III, AAA+ region stretch occupies residues 139 to 355 (MLNPRYTFSS…GSLNRVAAYA (217 aa)). 4 residues coordinate ATP: Gly183, Gly185, Lys186, and Thr187. Residues 356–479 (ELNRAPITIE…IRERIQMLRG (124 aa)) are domain IV, binds dsDNA.

The protein belongs to the DnaA family. As to quaternary structure, oligomerizes as a right-handed, spiral filament on DNA at oriC.

The protein localises to the cytoplasm. Its function is as follows. Plays an essential role in the initiation and regulation of chromosomal replication. ATP-DnaA binds to the origin of replication (oriC) to initiate formation of the DNA replication initiation complex once per cell cycle. Binds the DnaA box (a 9 base pair repeat at the origin) and separates the double-stranded (ds)DNA. Forms a right-handed helical filament on oriC DNA; dsDNA binds to the exterior of the filament while single-stranded (ss)DNA is stabiized in the filament's interior. The ATP-DnaA-oriC complex binds and stabilizes one strand of the AT-rich DNA unwinding element (DUE), permitting loading of DNA polymerase. After initiation quickly degrades to an ADP-DnaA complex that is not apt for DNA replication. Binds acidic phospholipids. This is Chromosomal replication initiator protein DnaA from Chloroflexus aurantiacus (strain ATCC 29366 / DSM 635 / J-10-fl).